We begin with the raw amino-acid sequence, 265 residues long: Transcription factor LBX1 (265 aa).

Over residues 1-20 (MTSKDEAKSSSVEERRRHAL) the composition is skewed to basic and acidic residues. Residues 1–33 (MTSKDEAKSSSVEERRRHALDLLPPPANSNKPL) are disordered. Positions 125-184 (RRKSRTAFTNHQIYELEKRFLYQKYLSPADRDQIAQQLGLTNAQVITWFQNRRAKLKRDL) form a DNA-binding region, homeobox. The tract at residues 212–265 (EEETNSVRDDSRSRSPQLGLSGHMPLSPSSPLTEQHTSKECSEDEEDVEIDVDD) is disordered. Positions 253-265 (SEDEEDVEIDVDD) are enriched in acidic residues.

The protein resides in the nucleus. Functionally, transcription factor that controls hypaxial muscle development by down-regulating myod1 and cdkn1b/p27, thereby allowing myoblasts to proliferate before the onset of terminal differentiation. The sequence is that of Transcription factor LBX1 from Xenopus tropicalis (Western clawed frog).